A 388-amino-acid polypeptide reads, in one-letter code: Succinate--CoA ligase [ADP-forming] subunit beta (388 aa).

An ATP-grasp domain is found at Lys-9–His-244. ATP contacts are provided by residues Lys-46, Gly-53–Gly-55, Glu-99, Thr-102, and Glu-107. 2 residues coordinate Mg(2+): Asn-199 and Asp-213. Substrate contacts are provided by residues Asn-264 and Gly-321 to Val-323.

Belongs to the succinate/malate CoA ligase beta subunit family. Heterotetramer of two alpha and two beta subunits. The cofactor is Mg(2+).

The catalysed reaction is succinate + ATP + CoA = succinyl-CoA + ADP + phosphate. The enzyme catalyses GTP + succinate + CoA = succinyl-CoA + GDP + phosphate. It functions in the pathway carbohydrate metabolism; tricarboxylic acid cycle; succinate from succinyl-CoA (ligase route): step 1/1. Functionally, succinyl-CoA synthetase functions in the citric acid cycle (TCA), coupling the hydrolysis of succinyl-CoA to the synthesis of either ATP or GTP and thus represents the only step of substrate-level phosphorylation in the TCA. The beta subunit provides nucleotide specificity of the enzyme and binds the substrate succinate, while the binding sites for coenzyme A and phosphate are found in the alpha subunit. The chain is Succinate--CoA ligase [ADP-forming] subunit beta from Colwellia psychrerythraea (strain 34H / ATCC BAA-681) (Vibrio psychroerythus).